The primary structure comprises 398 residues: Putative molybdopterin biosynthesis protein MJ0666 (398 aa).

This sequence belongs to the MoeA family.

Its pathway is cofactor biosynthesis; molybdopterin biosynthesis. The chain is Putative molybdopterin biosynthesis protein MJ0666 from Methanocaldococcus jannaschii (strain ATCC 43067 / DSM 2661 / JAL-1 / JCM 10045 / NBRC 100440) (Methanococcus jannaschii).